A 586-amino-acid polypeptide reads, in one-letter code: Cytosolic Fe-S cluster assembly factor NAR1 (586 aa).

[4Fe-4S] cluster is bound by residues cysteine 20, cysteine 73, cysteine 76, cysteine 79, cysteine 220, cysteine 275, cysteine 462, and cysteine 466.

Belongs to the NARF family.

In terms of biological role, component of the cytosolic Fe/S protein assembly machinery. Required for maturation of extramitochondrial Fe/S proteins. May play a role in the transfer of pre-assembled Fe/S clusters to target apoproteins. The chain is Cytosolic Fe-S cluster assembly factor NAR1 (NAR1) from Chaetomium globosum (strain ATCC 6205 / CBS 148.51 / DSM 1962 / NBRC 6347 / NRRL 1970) (Soil fungus).